The following is a 297-amino-acid chain: Bifunctional protein FolD (297 aa).

NADP(+) is bound by residues 169-171 (GRS), serine 196, and isoleucine 237.

It belongs to the tetrahydrofolate dehydrogenase/cyclohydrolase family. Homodimer.

The catalysed reaction is (6R)-5,10-methylene-5,6,7,8-tetrahydrofolate + NADP(+) = (6R)-5,10-methenyltetrahydrofolate + NADPH. The enzyme catalyses (6R)-5,10-methenyltetrahydrofolate + H2O = (6R)-10-formyltetrahydrofolate + H(+). It functions in the pathway one-carbon metabolism; tetrahydrofolate interconversion. Functionally, catalyzes the oxidation of 5,10-methylenetetrahydrofolate to 5,10-methenyltetrahydrofolate and then the hydrolysis of 5,10-methenyltetrahydrofolate to 10-formyltetrahydrofolate. This chain is Bifunctional protein FolD, found in Salinibacter ruber (strain DSM 13855 / M31).